Here is a 472-residue protein sequence, read N- to C-terminus: GTPase Der (472 aa).

2 EngA-type G domains span residues 3-166 and 178-351; these read AVIA…PPAE and IPVA…AAAH. GTP is bound by residues 9 to 16, 56 to 60, 118 to 121, 184 to 191, 231 to 235, and 296 to 299; these read GRPNVGKS, DTGGM, NKTD, DTAGV, and NKWD. Positions 352–436 constitute a KH-like domain; that stretch reads RDLATPELND…PVRIECRASD (85 aa). The tract at residues 434–472 is disordered; the sequence is ASDNPFADKPNQLTERQRRRRQRVIHHAKKREKKRKRRR. Basic residues predominate over residues 450 to 472; that stretch reads QRRRRQRVIHHAKKREKKRKRRR.

Belongs to the TRAFAC class TrmE-Era-EngA-EngB-Septin-like GTPase superfamily. EngA (Der) GTPase family. As to quaternary structure, associates with the 50S ribosomal subunit.

GTPase that plays an essential role in the late steps of ribosome biogenesis. This chain is GTPase Der, found in Halorhodospira halophila (strain DSM 244 / SL1) (Ectothiorhodospira halophila (strain DSM 244 / SL1)).